The sequence spans 289 residues: Ribonuclease H2 subunit A (289 aa).

Residues 20-249 (PFVMGIDEAG…TETAMRGACF (230 aa)) form the RNase H type-2 domain. Positions 26, 27, and 134 each coordinate a divalent metal cation.

It belongs to the RNase HII family. Eukaryotic subfamily. Requires Mn(2+) as cofactor. It depends on Mg(2+) as a cofactor.

The catalysed reaction is Endonucleolytic cleavage to 5'-phosphomonoester.. Endonuclease that specifically degrades the RNA of RNA-DNA hybrids. Participates in DNA replication. This Dictyostelium discoideum (Social amoeba) protein is Ribonuclease H2 subunit A (rnaseh2A).